We begin with the raw amino-acid sequence, 130 residues long: Albumin-1 B (130 aa).

Positions 1–26 (MASVKLASLMVLFATLGMFLTKNVGA) are cleaved as a signal peptide. 3 disulfide bridges follow: C29–C46, C33–C48, and C41–C58. Propeptides lie at residues 64 to 69 (VFLRTN) and 123 to 130 (LLKSVSTA).

The C-terminal glycine may be removed from PA1b. Major component of both the cotyledons and embryonic axes of mature seeds.

PA1b binds to basic 7S globulin (BG) and stimulates its phosphorylation activity. Involved in the signal transduction system to regulate the growth and differentiation as a hormone peptide. Toxic to various insects through binding to a high affinity binding site in the insect gut. The sequence is that of Albumin-1 B from Pisum sativum (Garden pea).